The primary structure comprises 509 residues: Zinc finger protein CKR1 (509 aa).

The region spanning 1–61 (MEPYVLLDPR…GSEEPQTHPP (61 aa)) is the KRAB domain. Basic and acidic residues-rich tracts occupy residues 41–50 (EDAVGLKEDA) and 98–112 (PKRD…RDRP). The segment at 41–114 (EDAVGLKEDA…PSRVRDRPFG (74 aa)) is disordered. 11 C2H2-type zinc fingers span residues 113–135 (FGCP…RRVH), 141–163 (YSCP…RRTH), 169–191 (HKCQ…SRGH), 197–219 (HRCG…RRVH), 225–247 (YECP…RRSH), 279–303 (QRCA…ERSH), 303–325 (HRCG…RRVH), 331–353 (FPCG…GKTH), 359–383 (YKCG…GHAA), 387–409 (FTCG…RRVH), and 415–437 (YECP…RRSH). The interval 428–479 (SHLTKHRRSHGPKAPLLPVQGRGEAGEPLRASPLSSGAEQRDGRRAQRGGVE) is disordered.

Belongs to the krueppel C2H2-type zinc-finger protein family.

The protein localises to the nucleus. The protein is Zinc finger protein CKR1 of Gallus gallus (Chicken).